The chain runs to 547 residues: Chaperonin GroEL (547 aa).

ATP-binding positions include 30 to 33 (TLGP), lysine 51, 87 to 91 (DGTTT), glycine 415, 479 to 481 (NAA), and aspartate 495.

This sequence belongs to the chaperonin (HSP60) family. As to quaternary structure, forms a cylinder of 14 subunits composed of two heptameric rings stacked back-to-back. Interacts with the co-chaperonin GroES.

Its subcellular location is the cytoplasm. It catalyses the reaction ATP + H2O + a folded polypeptide = ADP + phosphate + an unfolded polypeptide.. Its function is as follows. Together with its co-chaperonin GroES, plays an essential role in assisting protein folding. The GroEL-GroES system forms a nano-cage that allows encapsulation of the non-native substrate proteins and provides a physical environment optimized to promote and accelerate protein folding. The sequence is that of Chaperonin GroEL from Cupriavidus taiwanensis (strain DSM 17343 / BCRC 17206 / CCUG 44338 / CIP 107171 / LMG 19424 / R1) (Ralstonia taiwanensis (strain LMG 19424)).